Reading from the N-terminus, the 1009-residue chain is MGSRIKQNPETTFEVYVEVAYPRTGGTLSDPEVQRQFPEDYSDQEVLQTLTKFCFPFYVDSLTVSQVGQNFTFVLTDIDSKQRFGFCRLSSGAKSCFCILSYLPWFEVFYKLLNILADYTTKRQENQWNELLETLHKLPIPDPGVSVHLSVHSYFTVPDTRELPSIPENRNLTEYFVAVDVNNMLHLYASMLYERRILIICSKLSTLTACIHGSAAMLYPMYWQHVYIPVLPPHLLDYCCAPMPYLIGIHLSLMEKVRNMALDDVVILNVDTNTLETPFDDLQSLPNDVISSLKNRLKKVSTTTGDGVARAFLKAQAAFFGSYRNALKIEPEEPITFCEEAFVSHYRSGAMRQFLQNATQLQLFKQFIDGRLDLLNSGEGFSDVFEEEINMGEYAGSDKLYHQWLSTVRKGSGAILNTVKTKANPAMKTVYKFAKDHAKMGIKEVKNRLKQKDIAENGCAPTPEEQLPKTAPSPLVEAKDPKLREDRRPITVHFGQVRPPRPHVVKRPKSNIAVEGRRTSVPSPEQPQPYRTLRESDSAEGDEAESPEQQVRKSTGPVPAPPDRAASIDLLEDVFSNLDMEAALQPLGQAKSLEDLRAPKDLREQPGTFDYQRLDLGGSERSRGVTVALKLTHPYNKLWSLGQDDMAIPSKPPAASPEKPSALLGNSLALPRRPQNRDSILNPSDKEEVPTPTLGSITIPRPQGRKTPELGIVPPPPIPRPAKLQAAGAALGDVSERLQTDRDRRAALSPGLLPGVVPQGPTELLQPLSPGPGAAGTSSDALLALLDPLSTAWSGSTLPSRPATPNVATPFTPQFSFPPAGTPTPFPQPPLNPFVPSMPAAPPTLPLVSTPAGPFGAPPASLGPAFASGLLLSSAGFCAPHRSQPNLSALSMPNLFGQMPMGTHTSPLQPLGPPAVAPSRIRTLPLARSSARAAETKQGLALRPGDPPLLPPRPPQGLEPTLQPSAPQQARDPFEDLLQKTKQDVSPSPALAPAPDSVEQLRKQWETFE.

A uDENN domain is found at 13–145 (FEVYVEVAYP…HKLPIPDPGV (133 aa)). In terms of domain architecture, cDENN spans 162–298 (ELPSIPENRN…VISSLKNRLK (137 aa)). The dDENN domain occupies 300–378 (VSTTTGDGVA…DGRLDLLNSG (79 aa)). An FXDXF motif motif is present at residues 381-385 (FSDVF). Residues 453–564 (DIAENGCAPT…TGPVPAPPDR (112 aa)) form a disordered region. Serine 473 bears the Phosphoserine mark. A compositionally biased stretch (basic and acidic residues) spans 477–489 (EAKDPKLREDRRP). Residues 500 to 509 (PRPHVVKRPK) are compositionally biased toward basic residues. Residue threonine 519 is modified to Phosphothreonine. Phosphoserine occurs at positions 520, 523, 536, 538, and 546. A Clathrin box motif is present at residues 569-578 (DLLEDVFSNL). Residue serine 592 is modified to Phosphoserine. Positions 648-714 (IPSKPPAASP…RKTPELGIVP (67 aa)) are disordered. Serine 749 bears the Phosphoserine mark. Disordered regions lie at residues 796-831 (STLP…QPPL) and 928-1009 (RSSA…ETFE). 2 stretches are compositionally biased toward pro residues: residues 820-831 (AGTPTPFPQPPL) and 945-957 (GDPP…PPQG). The segment covering 972–983 (DPFEDLLQKTKQ) has biased composition (basic and acidic residues). Residues 986–997 (SPSPALAPAPDS) show a composition bias toward low complexity. A compositionally biased stretch (basic and acidic residues) spans 999 to 1009 (EQLRKQWETFE).

Interacts with RAB35. Interacts with clathrin and with the adapter protein complex 2, AP-2. Interacts with ITSN1 and SH3GL2. Interacts (when phosphorylated) with YWHAE. Post-translationally, phosphorylated on serine and/or threonine in an Akt-dependent manner. Phosphorylation probably regulates the guanine nucleotide exchange factor (GEF) activity, possibly by disrupting an intramolecular interaction between the DENN domain and the C-terminus of the protein, thereby relieving the autoinhibition.

It is found in the cytoplasmic vesicle. The protein resides in the clathrin-coated vesicle membrane. Its subcellular location is the presynaptic cell membrane. With respect to regulation, the guanine nucleotide exchange factor (GEF) activity is autoinhibited. Autoinhibition may be the result of intramolecular interaction between the DENN domain and the C-terminus, which is disrupted upon phosphorylation. Activation is regulated by Akt activation. In terms of biological role, guanine nucleotide exchange factor (GEF) regulating clathrin-mediated endocytosis through RAB35 activation. Promotes the exchange of GDP to GTP, converting inactive GDP-bound RAB35 into its active GTP-bound form. Regulates clathrin-mediated endocytosis of synaptic vesicles and mediates exit from early endosomes. Binds phosphatidylinositol-phosphates (PtdInsPs), with some preference for PtdIns(3)P. The chain is DENN domain-containing protein 1A from Homo sapiens (Human).